We begin with the raw amino-acid sequence, 145 residues long: Large ribosomal subunit protein uL13 (145 aa).

The protein belongs to the universal ribosomal protein uL13 family. Part of the 50S ribosomal subunit.

Its function is as follows. This protein is one of the early assembly proteins of the 50S ribosomal subunit, although it is not seen to bind rRNA by itself. It is important during the early stages of 50S assembly. The sequence is that of Large ribosomal subunit protein uL13 from Bacillus thuringiensis (strain Al Hakam).